We begin with the raw amino-acid sequence, 66 residues long: Large ribosomal subunit protein bL33c (66 aa).

Belongs to the bacterial ribosomal protein bL33 family.

Its subcellular location is the plastid. It localises to the chloroplast. This chain is Large ribosomal subunit protein bL33c, found in Daucus carota (Wild carrot).